Consider the following 257-residue polypeptide: 3-methyl-2-oxobutanoate hydroxymethyltransferase (257 aa).

Mg(2+) contacts are provided by D42 and D86. 3-methyl-2-oxobutanoate contacts are provided by residues 42-43 (DS), D86, and K116. Residue E118 coordinates Mg(2+). Residue E185 is the Proton acceptor of the active site.

It belongs to the PanB family. Homodecamer; pentamer of dimers. Requires Mg(2+) as cofactor.

The protein resides in the cytoplasm. It carries out the reaction 3-methyl-2-oxobutanoate + (6R)-5,10-methylene-5,6,7,8-tetrahydrofolate + H2O = 2-dehydropantoate + (6S)-5,6,7,8-tetrahydrofolate. It functions in the pathway cofactor biosynthesis; (R)-pantothenate biosynthesis; (R)-pantoate from 3-methyl-2-oxobutanoate: step 1/2. Its function is as follows. Catalyzes the reversible reaction in which hydroxymethyl group from 5,10-methylenetetrahydrofolate is transferred onto alpha-ketoisovalerate to form ketopantoate. The polypeptide is 3-methyl-2-oxobutanoate hydroxymethyltransferase (Prochlorococcus marinus subsp. pastoris (strain CCMP1986 / NIES-2087 / MED4)).